We begin with the raw amino-acid sequence, 297 residues long: Virulence genes transcriptional activator SpvR (297 aa).

An HTH lysR-type domain is found at methionine 1–threonine 61. A DNA-binding region (H-T-H motif) is located at residues phenylalanine 21–serine 40.

Belongs to the LysR transcriptional regulatory family.

It is found in the cytoplasm. Functionally, positive regulator for the plasmid-encoded virulence factors SpvA, SpvB, and SpvC. The protein is Virulence genes transcriptional activator SpvR (spvR) of Salmonella dublin.